Reading from the N-terminus, the 95-residue chain is Small ribosomal subunit protein bS6 (95 aa).

Belongs to the bacterial ribosomal protein bS6 family.

Binds together with bS18 to 16S ribosomal RNA. The protein is Small ribosomal subunit protein bS6 of Corynebacterium jeikeium (strain K411).